The chain runs to 620 residues: DNA mismatch repair protein MutL (620 aa).

A disordered region spans residues Ser353–Gly375.

This sequence belongs to the DNA mismatch repair MutL/HexB family.

Functionally, this protein is involved in the repair of mismatches in DNA. It is required for dam-dependent methyl-directed DNA mismatch repair. May act as a 'molecular matchmaker', a protein that promotes the formation of a stable complex between two or more DNA-binding proteins in an ATP-dependent manner without itself being part of a final effector complex. This Chelativorans sp. (strain BNC1) protein is DNA mismatch repair protein MutL.